Consider the following 63-residue polypeptide: Potassium channel toxin alpha-KTx 21.1 (63 aa).

Positions 1 to 27 (MQFSGVVLILISMTLVNFVFFETKVEA) are cleaved as a signal peptide. 3 disulfides stabilise this stretch: cysteine 33–cysteine 53, cysteine 38–cysteine 58, and cysteine 42–cysteine 60.

Belongs to the short scorpion toxin superfamily. Potassium channel inhibitor family. Alpha-KTx 21 subfamily. As to expression, expressed by the venom gland.

The protein localises to the secreted. Reversibly and voltage-independently blocks voltage-gated potassium channels rKv1.2/KCNA2 (73%) (IC(50)=196 nM), hKv1.3/KCNA3 (50%) (IC(50)=508 nM), Shaker IR (30%), rKv1.6/KCNA6 (22%) (at 0.5 uM). Interaction of Ts15 with Kv1.3/KCNA3 is stronger than its interaction with Kv1.2/KCNA2. The protein is Potassium channel toxin alpha-KTx 21.1 of Tityus serrulatus (Brazilian scorpion).